Here is a 284-residue protein sequence, read N- to C-terminus: Phosphatidylglycerol--prolipoprotein diacylglyceryl transferase (284 aa).

7 consecutive transmembrane segments (helical) span residues 14–34, 62–82, 106–126, 136–156, 190–210, 218–238, and 252–272; these read IAFS…ACAI, YFLW…ILIY, FVGI…IASY, LLIY…FGRI, PSQL…VMWA, GLLI…AEFY, and LSMG…ILLY. Residue R155 participates in a 1,2-diacyl-sn-glycero-3-phospho-(1'-sn-glycerol) binding.

The protein belongs to the Lgt family.

The protein localises to the cell inner membrane. It catalyses the reaction L-cysteinyl-[prolipoprotein] + a 1,2-diacyl-sn-glycero-3-phospho-(1'-sn-glycerol) = an S-1,2-diacyl-sn-glyceryl-L-cysteinyl-[prolipoprotein] + sn-glycerol 1-phosphate + H(+). It participates in protein modification; lipoprotein biosynthesis (diacylglyceryl transfer). In terms of biological role, catalyzes the transfer of the diacylglyceryl group from phosphatidylglycerol to the sulfhydryl group of the N-terminal cysteine of a prolipoprotein, the first step in the formation of mature lipoproteins. This is Phosphatidylglycerol--prolipoprotein diacylglyceryl transferase from Helicobacter pylori (strain ATCC 700392 / 26695) (Campylobacter pylori).